The sequence spans 243 residues: Ubiquinone/menaquinone biosynthesis C-methyltransferase UbiE (243 aa).

Residues T69, D90, and 116-117 (DA) contribute to the S-adenosyl-L-methionine site.

The protein belongs to the class I-like SAM-binding methyltransferase superfamily. MenG/UbiE family.

The catalysed reaction is a 2-demethylmenaquinol + S-adenosyl-L-methionine = a menaquinol + S-adenosyl-L-homocysteine + H(+). It carries out the reaction a 2-methoxy-6-(all-trans-polyprenyl)benzene-1,4-diol + S-adenosyl-L-methionine = a 5-methoxy-2-methyl-3-(all-trans-polyprenyl)benzene-1,4-diol + S-adenosyl-L-homocysteine + H(+). The protein operates within quinol/quinone metabolism; menaquinone biosynthesis; menaquinol from 1,4-dihydroxy-2-naphthoate: step 2/2. It functions in the pathway cofactor biosynthesis; ubiquinone biosynthesis. In terms of biological role, methyltransferase required for the conversion of demethylmenaquinol (DMKH2) to menaquinol (MKH2) and the conversion of 2-polyprenyl-6-methoxy-1,4-benzoquinol (DDMQH2) to 2-polyprenyl-3-methyl-6-methoxy-1,4-benzoquinol (DMQH2). The polypeptide is Ubiquinone/menaquinone biosynthesis C-methyltransferase UbiE (Burkholderia cenocepacia (strain ATCC BAA-245 / DSM 16553 / LMG 16656 / NCTC 13227 / J2315 / CF5610) (Burkholderia cepacia (strain J2315))).